A 217-amino-acid polypeptide reads, in one-letter code: Large ribosomal subunit protein uL3 (217 aa).

This sequence belongs to the universal ribosomal protein uL3 family. Part of the 50S ribosomal subunit. Forms a cluster with proteins L14 and L19.

One of the primary rRNA binding proteins, it binds directly near the 3'-end of the 23S rRNA, where it nucleates assembly of the 50S subunit. This Mycobacterium sp. (strain KMS) protein is Large ribosomal subunit protein uL3.